We begin with the raw amino-acid sequence, 205 residues long: Protein PAXX (205 aa).

The 43-residue stretch at 39-81 (FNLYVTDAAELWSTCFSPDSLARLKARFGLSGAEDIHSRFRAA) folds into the PISA domain. At threonine 147 the chain carries Phosphothreonine. Residues 147–159 (TITSPKKNTQPAG) are compositionally biased toward polar residues. Residues 147 to 205 (TITSPKKNTQPAGTQFLPELDHQRGSSGPGVRRRCPGESLINPGFKSKKPAAGVDFDET) are disordered. Phosphoserine is present on serine 150. The segment at 172-205 (SSGPGVRRRCPGESLINPGFKSKKPAAGVDFDET) is mediates interaction with XRCC5/Ku80 and XRCC6/Ku70 and association with the non-homologous end joining core complex. The XLM signature appears at 191–205 (FKSKKPAAGVDFDET).

The protein belongs to the XRCC4-XLF family. PAXX subfamily. Homodimer. Interacts with the DNA-bound XRCC5/Ku80 and XRCC6/Ku70 heterodimer (Ku complex); the interaction is direct. Associated component of the non-homologous end joining (NHEJ) complex, composed of the core proteins PRKDC, LIG4, XRCC4, XRCC6/Ku70, XRCC5/Ku86 and NHEJ1/XLF. Interacts with POLL (DNA polymerase lambda); promoting POLL recruitment to double-strand breaks (DSBs) and stimulation of the end-filling activity of POLL. Post-translationally, phosphorylation may inhibit interaction with the DNA-bound XRCC5/Ku80 and XRCC6/Ku70 heterodimer (Ku complex).

The protein localises to the nucleus. Its subcellular location is the chromosome. Its function is as follows. Non-essential DNA repair protein involved in DNA non-homologous end joining (NHEJ); participates in double-strand break (DSB) repair and V(D)J recombination. May act as a scaffold required for accumulation of the Ku heterodimer, composed of XRCC5/Ku80 and XRCC6/Ku70, at double-strand break sites and promote the assembly and/or stability of the NHEJ machinery. Involved in NHEJ by promoting the ligation of blunt-ended DNA ends. Together with NHEJ1/XLF, collaborates with DNA polymerase lambda (POLL) to promote joining of non-cohesive DNA ends. Constitutes a non-essential component of classical NHEJ: has a complementary but distinct function with NHEJ1/XLF in DNA repair. This is Protein PAXX from Mus musculus (Mouse).